A 980-amino-acid chain; its full sequence is MAAYNAPVSNCQFRLTHILPIPQRHGAPTDPFQMNAIRQQSDSAEPLRHDIRLLGRCLGEVIQACEGKRVYDTIETLRRTAVRFRRAGDPADDKLLQARVKQLRGNDPNSVARAFSYFLHLSNIAEDRDQNRRQRERALAGAGPERGSLRQAIESLKAQGVNNARIRRLLSEACVMPVLTAHPTEVQRKSTLDVHREISSLLVQRERELTADELSELDLALIGQVATLWQTRMLRYTRLTVADEIENALSYYRSTFLNVIPRVYGDLARLLNREPVKPFTPPPPPLEPFLRMGSWIGGDRDGNPNVDAATLERALLRQATVLFEHYLQEVHALGAELSASTLLIEADPALLALADAGGDDSPHRRDEPYRRALIGIYARLAATARHLTGQKLARRATVPAAPYDTPDALAADLAVIAASLSARHGAPIARLRLSGLQQAVTVFGFHLATVDLRQSSDVHERVLAELFARAGDGIDGQAVDYLALDEAARVAGRELAHARPLASPWIAYSEETASELAVLRAAAAGRARYGRQAVLQSIVSHTETLSDLLEVLVLQKEAGLIAPPGETIAPGDGLMVVPLFETIPDLQRGPEIMAAWLDLPEVRQRVRLAQGDTQEVMLGYSDSNKDGGFLTSNWSLYQAERALVDVFSARSVRLRMFHGRGDSVGRGGGSSYDAILAQPPGTVAGQLRLTEQGEVIQSKYKDAEVGRWHLELLVAATLESSLAPQAAATSAEDAHMQQHAPAMSFMSELAQRTYRGLVYDTPGFADYFFAATPISEIAGLNIGSRPASRKKGQHIEDLRAIPWGFSWAQCRLMLTGWYGMGSAIEAYLETGAQGAPRSRRARLAQLREMASDWPAFRTLLSNMEMVLAKSDLAIAAGYAQLVPRRGLRERVFGAITAEHGRTLAMLRLLTRRDLLADNPGLMASLRERFAYIDPLNYLQIELIKRHRAAQRRAGDDADIRVPRAIHLTINGIAAGLRNSG.

Catalysis depends on residues histidine 182 and lysine 625.

The protein belongs to the PEPCase type 1 family. The cofactor is Mg(2+).

It catalyses the reaction oxaloacetate + phosphate = phosphoenolpyruvate + hydrogencarbonate. Functionally, forms oxaloacetate, a four-carbon dicarboxylic acid source for the tricarboxylic acid cycle. The protein is Phosphoenolpyruvate carboxylase of Bordetella pertussis (strain Tohama I / ATCC BAA-589 / NCTC 13251).